Reading from the N-terminus, the 250-residue chain is 3-deoxy-manno-octulosonate cytidylyltransferase (250 aa).

It belongs to the KdsB family.

The protein resides in the cytoplasm. The catalysed reaction is 3-deoxy-alpha-D-manno-oct-2-ulosonate + CTP = CMP-3-deoxy-beta-D-manno-octulosonate + diphosphate. The protein operates within nucleotide-sugar biosynthesis; CMP-3-deoxy-D-manno-octulosonate biosynthesis; CMP-3-deoxy-D-manno-octulosonate from 3-deoxy-D-manno-octulosonate and CTP: step 1/1. It participates in bacterial outer membrane biogenesis; lipopolysaccharide biosynthesis. Its function is as follows. Activates KDO (a required 8-carbon sugar) for incorporation into bacterial lipopolysaccharide in Gram-negative bacteria. The polypeptide is 3-deoxy-manno-octulosonate cytidylyltransferase (Legionella pneumophila (strain Lens)).